The primary structure comprises 236 residues: 2,3,4,5-tetrahydropyridine-2,6-dicarboxylate N-acetyltransferase (236 aa).

This sequence belongs to the transferase hexapeptide repeat family. DapH subfamily.

The catalysed reaction is (S)-2,3,4,5-tetrahydrodipicolinate + acetyl-CoA + H2O = L-2-acetamido-6-oxoheptanedioate + CoA. The protein operates within amino-acid biosynthesis; L-lysine biosynthesis via DAP pathway; LL-2,6-diaminopimelate from (S)-tetrahydrodipicolinate (acetylase route): step 1/3. Its function is as follows. Catalyzes the transfer of an acetyl group from acetyl-CoA to tetrahydrodipicolinate. This is 2,3,4,5-tetrahydropyridine-2,6-dicarboxylate N-acetyltransferase from Clostridium botulinum (strain 657 / Type Ba4).